Here is a 306-residue protein sequence, read N- to C-terminus: Pantothenate kinase (306 aa).

Residue 91-98 (GSVAVGKS) participates in ATP binding.

The protein belongs to the prokaryotic pantothenate kinase family.

The protein localises to the cytoplasm. It carries out the reaction (R)-pantothenate + ATP = (R)-4'-phosphopantothenate + ADP + H(+). The protein operates within cofactor biosynthesis; coenzyme A biosynthesis; CoA from (R)-pantothenate: step 1/5. This Streptococcus suis (strain 05ZYH33) protein is Pantothenate kinase.